Here is a 301-residue protein sequence, read N- to C-terminus: Probable alpha-L-glutamate ligase (301 aa).

The ATP-grasp domain occupies 104–287 (LQLLSRKGVG…IAGMVIDFIE (184 aa)). ATP contacts are provided by residues K141, 178–179 (EY), D187, and 211–213 (RSN). Positions 248, 260, and 262 each coordinate Mg(2+). D248, E260, and N262 together coordinate Mn(2+).

The protein belongs to the RimK family. Mg(2+) is required as a cofactor. It depends on Mn(2+) as a cofactor.

In Pseudoalteromonas translucida (strain TAC 125), this protein is Probable alpha-L-glutamate ligase.